A 165-amino-acid chain; its full sequence is Chorismate pyruvate-lyase (165 aa).

4 residues coordinate substrate: Met35, Arg77, Leu115, and Glu156.

The protein belongs to the UbiC family. In terms of assembly, monomer.

It localises to the cytoplasm. The enzyme catalyses chorismate = 4-hydroxybenzoate + pyruvate. Its pathway is cofactor biosynthesis; ubiquinone biosynthesis. In terms of biological role, removes the pyruvyl group from chorismate, with concomitant aromatization of the ring, to provide 4-hydroxybenzoate (4HB) for the ubiquinone pathway. In Salmonella agona (strain SL483), this protein is Chorismate pyruvate-lyase.